The following is a 485-amino-acid chain: Glutamyl-tRNA(Gln) amidotransferase subunit A (485 aa).

Residues Lys78 and Ser153 each act as charge relay system in the active site. Ser177 (acyl-ester intermediate) is an active-site residue.

This sequence belongs to the amidase family. GatA subfamily. Heterotrimer of A, B and C subunits.

It catalyses the reaction L-glutamyl-tRNA(Gln) + L-glutamine + ATP + H2O = L-glutaminyl-tRNA(Gln) + L-glutamate + ADP + phosphate + H(+). Its function is as follows. Allows the formation of correctly charged Gln-tRNA(Gln) through the transamidation of misacylated Glu-tRNA(Gln) in organisms which lack glutaminyl-tRNA synthetase. The reaction takes place in the presence of glutamine and ATP through an activated gamma-phospho-Glu-tRNA(Gln). This Desulfatibacillum aliphaticivorans protein is Glutamyl-tRNA(Gln) amidotransferase subunit A.